The chain runs to 845 residues: Ribosome-releasing factor 2, mitochondrial (845 aa).

The transit peptide at 1–28 directs the protein to the mitochondrion; that stretch reads MIIATSLRSQTFCTWRAWRAVHSTAVRL. Residues 38-330 form the tr-type G domain; that stretch reads DRTRNIGIIA…GVVKYLPSPL (293 aa). GTP contacts are provided by residues 47 to 54, 111 to 115, and 165 to 168; these read AHIDAGKT, DTPGH, and NKMD.

This sequence belongs to the TRAFAC class translation factor GTPase superfamily. Classic translation factor GTPase family. EF-G/EF-2 subfamily.

It is found in the mitochondrion. Its function is as follows. Mitochondrial GTPase that mediates the disassembly of ribosomes from messenger RNA at the termination of mitochondrial protein biosynthesis. Not involved in the GTP-dependent ribosomal translocation step during translation elongation. The chain is Ribosome-releasing factor 2, mitochondrial from Scheffersomyces stipitis (strain ATCC 58785 / CBS 6054 / NBRC 10063 / NRRL Y-11545) (Yeast).